We begin with the raw amino-acid sequence, 522 residues long: MEELQGYLEKGESRQQHFLYPLLFQEYIYALAHDYSLNSSIFYEPMEIFGYDNKSSLALVKRLIIRIYQQNSLISSVNDSNQNRLLWHNHFFYSHFYSQMISESFGILVEIPFSLRLVSYFEEIEISKYXNLRSIHSIFPFLEDKLSHLNYVSDILIPHPIHMEILVQILQCWIQDVPFLHFLQFFLREYHNWNSLLITQKKSIYVFSKENKRLFRLLYNSYAFECEFLFXFIRXQSYYLRXISYGTFLERTHFYGKIEHLQIEHFIFIVVCRNYFHRTLWLFKDSFMHYVRYEGKAILASKGTGTPLLMKKWKYLFFHFWQYYFHFWSQPYRIHISPLSKHSFYFLGYLSSLLRNFLAVRNQMLDNSFLTDTIIKKLDTTVPVILLIGSLSKAKFCTVSGHPISKPIWADLPDSDILDQFGRICKNLSHYHSGSSKKRDLYRIKYILRLSCARTLARKHKSTVRTFLRRLGSGLLEEFFTEEEQVLSLIFPKTTPFILHGSHRERIWYLDIIRINDLVNYS.

Belongs to the intron maturase 2 family. MatK subfamily.

Its subcellular location is the plastid. It is found in the chloroplast. Functionally, usually encoded in the trnK tRNA gene intron. Probably assists in splicing its own and other chloroplast group II introns. The protein is Maturase K of Dianella ensifolia (Flax lily).